The chain runs to 431 residues: Enolase (431 aa).

(2R)-2-phosphoglycerate is bound at residue glutamine 166. Catalysis depends on glutamate 208, which acts as the Proton donor. Mg(2+) contacts are provided by aspartate 245, glutamate 288, and aspartate 315. Lysine 340, arginine 369, serine 370, and lysine 391 together coordinate (2R)-2-phosphoglycerate. Lysine 340 acts as the Proton acceptor in catalysis.

It belongs to the enolase family. It depends on Mg(2+) as a cofactor.

It is found in the cytoplasm. The protein resides in the secreted. It localises to the cell surface. The catalysed reaction is (2R)-2-phosphoglycerate = phosphoenolpyruvate + H2O. The protein operates within carbohydrate degradation; glycolysis; pyruvate from D-glyceraldehyde 3-phosphate: step 4/5. In terms of biological role, catalyzes the reversible conversion of 2-phosphoglycerate (2-PG) into phosphoenolpyruvate (PEP). It is essential for the degradation of carbohydrates via glycolysis. The protein is Enolase of Clostridium botulinum (strain Loch Maree / Type A3).